A 91-amino-acid chain; its full sequence is Large ribosomal subunit protein uL23 (91 aa).

It belongs to the universal ribosomal protein uL23 family. In terms of assembly, part of the 50S ribosomal subunit. Contacts protein L29.

Functionally, binds to 23S rRNA. One of the proteins that surrounds the polypeptide exit tunnel on the outside of the ribosome. The protein is Large ribosomal subunit protein uL23 of Staphylothermus marinus (strain ATCC 43588 / DSM 3639 / JCM 9404 / F1).